The chain runs to 471 residues: ATP synthase subunit beta (471 aa).

152–159 provides a ligand contact to ATP; sequence GGAGVGKT.

This sequence belongs to the ATPase alpha/beta chains family. F-type ATPases have 2 components, CF(1) - the catalytic core - and CF(0) - the membrane proton channel. CF(1) has five subunits: alpha(3), beta(3), gamma(1), delta(1), epsilon(1). CF(0) has three main subunits: a(1), b(2) and c(9-12). The alpha and beta chains form an alternating ring which encloses part of the gamma chain. CF(1) is attached to CF(0) by a central stalk formed by the gamma and epsilon chains, while a peripheral stalk is formed by the delta and b chains.

Its subcellular location is the cell membrane. The enzyme catalyses ATP + H2O + 4 H(+)(in) = ADP + phosphate + 5 H(+)(out). Its function is as follows. Produces ATP from ADP in the presence of a proton gradient across the membrane. The catalytic sites are hosted primarily by the beta subunits. The polypeptide is ATP synthase subunit beta (Herpetosiphon aurantiacus (Herpetosiphon giganteus)).